We begin with the raw amino-acid sequence, 111 residues long: Glucosamine 6-phosphate N-acetyltransferase (111 aa).

The region spanning 1–111 is the N-acetyltransferase domain; sequence MKKDFHSTYY…MKKYASHSII (111 aa). Residues 33 to 36 and 45 to 47 each bind substrate; these read KFLR and EEV. Residues 47–49 and 55–60 each bind acetyl-CoA; these read VIV and RKAIGK. Residues 76 to 77 and Asp81 contribute to the substrate site; that span reads YK. Residue 90–92 coordinates acetyl-CoA; it reads YEK.

The protein belongs to the acetyltransferase family. GNA1 subfamily.

The enzyme catalyses D-glucosamine 6-phosphate + acetyl-CoA = N-acetyl-D-glucosamine 6-phosphate + CoA + H(+). It functions in the pathway nucleotide-sugar biosynthesis; UDP-N-acetyl-alpha-D-glucosamine biosynthesis; N-acetyl-alpha-D-glucosamine 1-phosphate from alpha-D-glucosamine 6-phosphate (route I): step 1/2. The chain is Glucosamine 6-phosphate N-acetyltransferase (gna1) from Schizosaccharomyces pombe (strain 972 / ATCC 24843) (Fission yeast).